The chain runs to 103 residues: Large ribosomal subunit protein bL21 (103 aa).

This sequence belongs to the bacterial ribosomal protein bL21 family. In terms of assembly, part of the 50S ribosomal subunit. Contacts protein L20.

Its function is as follows. This protein binds to 23S rRNA in the presence of protein L20. This is Large ribosomal subunit protein bL21 from Polaromonas naphthalenivorans (strain CJ2).